Here is a 290-residue protein sequence, read N- to C-terminus: Transposon Ty3-I Gag polyprotein (290 aa).

An N-acetylserine modification is found at serine 2. The CCHC-type zinc finger occupies 265–282; that stretch reads RLCFYCKKEGHRLNECRA.

Its subcellular location is the cytoplasm. Its function is as follows. Capsid protein (CA) is the structural component of the virus-like particle (VLP), forming the shell that encapsulates the retrotransposons dimeric RNA genome. Nucleocapsid protein p9 (NC) forms the nucleocore that coats the retro-elements dimeric RNA. Binds these RNAs through its zinc fingers. Promotes primer tRNA(i)-Met annealing to the multipartite primer-binding site (PBS), dimerization of Ty3 RNA and initiation of reverse transcription. In Saccharomyces cerevisiae (strain ATCC 204508 / S288c) (Baker's yeast), this protein is Transposon Ty3-I Gag polyprotein (TY3A-I).